A 366-amino-acid chain; its full sequence is Flagellar P-ring protein (366 aa).

Residues Met1–Ala23 form the signal peptide.

This sequence belongs to the FlgI family. The basal body constitutes a major portion of the flagellar organelle and consists of four rings (L,P,S, and M) mounted on a central rod.

It is found in the periplasm. The protein resides in the bacterial flagellum basal body. Assembles around the rod to form the L-ring and probably protects the motor/basal body from shearing forces during rotation. This chain is Flagellar P-ring protein, found in Idiomarina loihiensis (strain ATCC BAA-735 / DSM 15497 / L2-TR).